A 276-amino-acid chain; its full sequence is MVLVEFLTGFFYLYGKRLFSISKVMDMICLDYYTIIPAPLAMMLAARLKNYDLMKRLHEWEISVDYALLVVDDVPSIDFCLSLGAKSPTRAQKRELLRDNTFNPVYKYLMNCSGFPTKREKNIPCDVQCERLQKNIIKELVFNCSVLLEMVLHTEREYAYALHCAAKHNQLPILMYCWQQSTDAESILLKTCCSDKNINCFNYCILYGGAQNLDAAMVEAAKHDARMLINYCVMLGGRSLNQAKETAAMFGHIECAQHCFKLQSYVMDTLNVDDTD.

This sequence belongs to the asfivirus MGF 360 family.

Functionally, plays a role in virus cell tropism, and may be required for efficient virus replication in macrophages. This chain is Protein MGF 360-15R, found in African swine fever virus (isolate Tick/South Africa/Pretoriuskop Pr4/1996) (ASFV).